Reading from the N-terminus, the 206-residue chain is Small ribosomal subunit protein uS4c (206 aa).

The S4 RNA-binding domain maps to 93–161 (MRLDNIVYRL…IEKNIELLDK (69 aa)).

It belongs to the universal ribosomal protein uS4 family. In terms of assembly, part of the 30S ribosomal subunit. Contacts protein S5. The interaction surface between S4 and S5 is involved in control of translational fidelity.

The protein resides in the plastid. Functionally, one of the primary rRNA binding proteins, it binds directly to 16S rRNA where it nucleates assembly of the body of the 30S subunit. Its function is as follows. With S5 and S12 plays an important role in translational accuracy. This chain is Small ribosomal subunit protein uS4c (rps4), found in Euglena longa (Euglenophycean alga).